We begin with the raw amino-acid sequence, 158 residues long: Endoribonuclease YbeY (158 aa).

Positions 124, 128, and 134 each coordinate Zn(2+).

This sequence belongs to the endoribonuclease YbeY family. The cofactor is Zn(2+).

The protein resides in the cytoplasm. Functionally, single strand-specific metallo-endoribonuclease involved in late-stage 70S ribosome quality control and in maturation of the 3' terminus of the 16S rRNA. This chain is Endoribonuclease YbeY, found in Caldicellulosiruptor bescii (strain ATCC BAA-1888 / DSM 6725 / KCTC 15123 / Z-1320) (Anaerocellum thermophilum).